A 489-amino-acid polypeptide reads, in one-letter code: Ammonium transporter MEP3 (489 aa).

The Extracellular portion of the chain corresponds to Met1 to Thr17. A helical transmembrane segment spans residues Val18–Leu38. Topologically, residues Tyr39–Ala48 are cytoplasmic. The chain crosses the membrane as a helical span at residues Leu49–Trp69. Residues Gly70–Glu108 are Extracellular-facing. The chain crosses the membrane as a helical span at residues Leu109 to Ala129. Topologically, residues Thr130–His139 are cytoplasmic. A helical membrane pass occupies residues Met140 to Ala160. The Extracellular portion of the chain corresponds to Pro161–Trp173. Residues Ala174–Leu194 traverse the membrane as a helical segment. Residues Gly195–Asn209 lie on the Cytoplasmic side of the membrane. A helical membrane pass occupies residues Val210–Ala230. At Ser231–Ser239 the chain is on the extracellular side. Residues Val240–Leu260 traverse the membrane as a helical segment. Residues Asp261–Lys267 lie on the Cytoplasmic side of the membrane. A helical membrane pass occupies residues Trp268–Ser288. Position 289 (Gly289) is a topological domain, extracellular. A helical membrane pass occupies residues Cys290–Ala310. Residues Thr311 to Gly330 are Cytoplasmic-facing. Residues Ile331–Met351 form a helical membrane-spanning segment. The Extracellular segment spans residues Asp352 to Gln372. A helical membrane pass occupies residues Ile373 to Val393. The Cytoplasmic segment spans residues Leu394–Ala489. A compositionally biased stretch (polar residues) spans Gly448 to Pro481. The interval Gly448–Ala489 is disordered.

Belongs to the ammonia transporter channel (TC 1.A.11.2) family.

The protein resides in the membrane. Its function is as follows. Transporter for ammonium (both charged and uncharged NH3 and NH4) to use as a nitrogen source. The affinity of MEP2 is about twenty times higher than that of MEP1. MEP3 has the lowest affinity. The sequence is that of Ammonium transporter MEP3 (MEP3) from Saccharomyces cerevisiae (strain ATCC 204508 / S288c) (Baker's yeast).